A 152-amino-acid chain; its full sequence is Deoxyuridine 5'-triphosphate nucleotidohydrolase (152 aa).

Substrate-binding positions include 71–73 (RSG), asparagine 84, 88–90 (LID), and methionine 98.

The protein belongs to the dUTPase family. It depends on Mg(2+) as a cofactor.

It catalyses the reaction dUTP + H2O = dUMP + diphosphate + H(+). It functions in the pathway pyrimidine metabolism; dUMP biosynthesis; dUMP from dCTP (dUTP route): step 2/2. This enzyme is involved in nucleotide metabolism: it produces dUMP, the immediate precursor of thymidine nucleotides and it decreases the intracellular concentration of dUTP so that uracil cannot be incorporated into DNA. The chain is Deoxyuridine 5'-triphosphate nucleotidohydrolase from Aeromonas salmonicida (strain A449).